Consider the following 324-residue polypeptide: NADH-quinone oxidoreductase subunit H (324 aa).

Helical transmembrane passes span 11–31, 81–101, 114–134, 154–174, 186–206, 237–257, 264–284, and 304–324; these read ILIT…CGAF, VIFT…FAIV, IGIL…LFAG, VSYE…AGSF, LWNV…GVAV, FFVG…TLFF, ILPP…MFIL, and VCLP…LYNA.

The protein belongs to the complex I subunit 1 family. In terms of assembly, NDH-1 is composed of 13 different subunits. Subunits NuoA, H, J, K, L, M, N constitute the membrane sector of the complex.

It is found in the cell inner membrane. The catalysed reaction is a quinone + NADH + 5 H(+)(in) = a quinol + NAD(+) + 4 H(+)(out). Its function is as follows. NDH-1 shuttles electrons from NADH, via FMN and iron-sulfur (Fe-S) centers, to quinones in the respiratory chain. The immediate electron acceptor for the enzyme in this species is believed to be ubiquinone. Couples the redox reaction to proton translocation (for every two electrons transferred, four hydrogen ions are translocated across the cytoplasmic membrane), and thus conserves the redox energy in a proton gradient. This subunit may bind ubiquinone. In Pectobacterium carotovorum subsp. carotovorum (strain PC1), this protein is NADH-quinone oxidoreductase subunit H.